The sequence spans 529 residues: Membrane-bound lytic murein transglycosylase F (529 aa).

An N-terminal signal peptide occupies residues 1–27 (MPIFNLHQLRNFLFIIATTLFLSACQI). Positions 28–287 (ESKPTSELDQ…RLEEKYIGHI (260 aa)) are non-LT domain. The interval 288-529 (GSFDYVDTRA…QATLTTEVQP (242 aa)) is LT domain. The active site involves glutamate 332. The disordered stretch occupies residues 510–529 (EALSPDVGVSQATLTTEVQP). Residues 519–529 (SQATLTTEVQP) are compositionally biased toward polar residues.

It in the N-terminal section; belongs to the bacterial solute-binding protein 3 family. The protein in the C-terminal section; belongs to the transglycosylase Slt family.

It is found in the cell outer membrane. The catalysed reaction is Exolytic cleavage of the (1-&gt;4)-beta-glycosidic linkage between N-acetylmuramic acid (MurNAc) and N-acetylglucosamine (GlcNAc) residues in peptidoglycan, from either the reducing or the non-reducing ends of the peptidoglycan chains, with concomitant formation of a 1,6-anhydrobond in the MurNAc residue.. In terms of biological role, murein-degrading enzyme that degrades murein glycan strands and insoluble, high-molecular weight murein sacculi, with the concomitant formation of a 1,6-anhydromuramoyl product. Lytic transglycosylases (LTs) play an integral role in the metabolism of the peptidoglycan (PG) sacculus. Their lytic action creates space within the PG sacculus to allow for its expansion as well as for the insertion of various structures such as secretion systems and flagella. The sequence is that of Membrane-bound lytic murein transglycosylase F from Vibrio vulnificus (strain CMCP6).